A 122-amino-acid chain; its full sequence is Small ribosomal subunit protein uS13 (122 aa).

A disordered region spans residues 95 to 122 (GLPVRGQRTHTNARTRKGPRRGTVGKKK).

The protein belongs to the universal ribosomal protein uS13 family. As to quaternary structure, part of the 30S ribosomal subunit. Forms a loose heterodimer with protein S19. Forms two bridges to the 50S subunit in the 70S ribosome.

Its function is as follows. Located at the top of the head of the 30S subunit, it contacts several helices of the 16S rRNA. In the 70S ribosome it contacts the 23S rRNA (bridge B1a) and protein L5 of the 50S subunit (bridge B1b), connecting the 2 subunits; these bridges are implicated in subunit movement. Contacts the tRNAs in the A and P-sites. The sequence is that of Small ribosomal subunit protein uS13 from Nitratidesulfovibrio vulgaris (strain ATCC 29579 / DSM 644 / CCUG 34227 / NCIMB 8303 / VKM B-1760 / Hildenborough) (Desulfovibrio vulgaris).